A 157-amino-acid polypeptide reads, in one-letter code: Xanthine-guanine phosphoribosyltransferase (157 aa).

Residues 42-43 (RG) and 93-101 (DDLVDTGNT) contribute to the 5-phospho-alpha-D-ribose 1-diphosphate site. Asp94 lines the Mg(2+) pocket. Residues Asp97 and Ile140 each contribute to the guanine site. Positions 97 and 140 each coordinate xanthine. Residues 97-101 (DTGNT) and 139-140 (WI) contribute to the GMP site.

Belongs to the purine/pyrimidine phosphoribosyltransferase family. XGPT subfamily. In terms of assembly, homotetramer. Requires Mg(2+) as cofactor.

The protein localises to the cell inner membrane. It catalyses the reaction GMP + diphosphate = guanine + 5-phospho-alpha-D-ribose 1-diphosphate. The catalysed reaction is XMP + diphosphate = xanthine + 5-phospho-alpha-D-ribose 1-diphosphate. The enzyme catalyses IMP + diphosphate = hypoxanthine + 5-phospho-alpha-D-ribose 1-diphosphate. Its pathway is purine metabolism; GMP biosynthesis via salvage pathway; GMP from guanine: step 1/1. It participates in purine metabolism; XMP biosynthesis via salvage pathway; XMP from xanthine: step 1/1. Its function is as follows. Purine salvage pathway enzyme that catalyzes the transfer of the ribosyl-5-phosphate group from 5-phospho-alpha-D-ribose 1-diphosphate (PRPP) to the N9 position of the 6-oxopurines guanine and xanthine to form the corresponding ribonucleotides GMP (guanosine 5'-monophosphate) and XMP (xanthosine 5'-monophosphate), with the release of PPi. To a lesser extent, also acts on hypoxanthine. The chain is Xanthine-guanine phosphoribosyltransferase from Actinobacillus pleuropneumoniae serotype 5b (strain L20).